A 427-amino-acid chain; its full sequence is Serine--tRNA ligase (427 aa).

L-serine is bound at residue 228–230 (TSE). 259 to 261 (RSE) serves as a coordination point for ATP. Glu282 contacts L-serine. An ATP-binding site is contributed by 346–349 (EISS). Ser384 lines the L-serine pocket.

Belongs to the class-II aminoacyl-tRNA synthetase family. Type-1 seryl-tRNA synthetase subfamily. In terms of assembly, homodimer. The tRNA molecule binds across the dimer.

The protein resides in the cytoplasm. The enzyme catalyses tRNA(Ser) + L-serine + ATP = L-seryl-tRNA(Ser) + AMP + diphosphate + H(+). It carries out the reaction tRNA(Sec) + L-serine + ATP = L-seryl-tRNA(Sec) + AMP + diphosphate + H(+). It functions in the pathway aminoacyl-tRNA biosynthesis; selenocysteinyl-tRNA(Sec) biosynthesis; L-seryl-tRNA(Sec) from L-serine and tRNA(Sec): step 1/1. Catalyzes the attachment of serine to tRNA(Ser). Is also able to aminoacylate tRNA(Sec) with serine, to form the misacylated tRNA L-seryl-tRNA(Sec), which will be further converted into selenocysteinyl-tRNA(Sec). The polypeptide is Serine--tRNA ligase (Ehrlichia ruminantium (strain Welgevonden)).